Reading from the N-terminus, the 143-residue chain is Hemoglobin subunit alpha-1 (143 aa).

Ser2 carries the post-translational modification N-acetylserine. In terms of domain architecture, Globin spans Ser2–Arg143. O2 is bound at residue His60. A heme b-binding site is contributed by His89.

This sequence belongs to the globin family. As to quaternary structure, hb 1 is a heterotetramer of two alpha-1 and two beta-1 chains. As to expression, red blood cells.

Its function is as follows. Involved in oxygen transport from gills to the various peripheral tissues. This chain is Hemoglobin subunit alpha-1 (hba1), found in Arctogadus glacialis (Arctic cod).